The chain runs to 292 residues: Elongation factor Ts (292 aa).

The involved in Mg(2+) ion dislocation from EF-Tu stretch occupies residues 80 to 83 (TDFV).

Belongs to the EF-Ts family.

Its subcellular location is the cytoplasm. Its function is as follows. Associates with the EF-Tu.GDP complex and induces the exchange of GDP to GTP. It remains bound to the aminoacyl-tRNA.EF-Tu.GTP complex up to the GTP hydrolysis stage on the ribosome. The chain is Elongation factor Ts from Ralstonia pickettii (strain 12J).